A 264-amino-acid chain; its full sequence is GTP cyclohydrolase FolE2 (264 aa).

This sequence belongs to the GTP cyclohydrolase IV family.

It catalyses the reaction GTP + H2O = 7,8-dihydroneopterin 3'-triphosphate + formate + H(+). The protein operates within cofactor biosynthesis; 7,8-dihydroneopterin triphosphate biosynthesis; 7,8-dihydroneopterin triphosphate from GTP: step 1/1. Functionally, converts GTP to 7,8-dihydroneopterin triphosphate. The polypeptide is GTP cyclohydrolase FolE2 (Akkermansia muciniphila (strain ATCC BAA-835 / DSM 22959 / JCM 33894 / BCRC 81048 / CCUG 64013 / CIP 107961 / Muc)).